The chain runs to 186 residues: Dihydrofolate reductase (186 aa).

Residues 3 to 183 (KFSLIVAVCA…IQYQYRIYEK (181 aa)) form the DHFR domain. Residues Ala-9 and 15–21 (GIGIKGD) each bind NADP(+). 29–34 (ELKYFS) is a substrate binding site. An NADP(+)-binding site is contributed by 53-55 (RKT). Residue Arg-69 participates in substrate binding. NADP(+) is bound by residues 75 to 77 (TRD) and 116 to 123 (GGNAVYKE).

Belongs to the dihydrofolate reductase family.

It catalyses the reaction (6S)-5,6,7,8-tetrahydrofolate + NADP(+) = 7,8-dihydrofolate + NADPH + H(+). It participates in cofactor biosynthesis; tetrahydrofolate biosynthesis; 5,6,7,8-tetrahydrofolate from 7,8-dihydrofolate: step 1/1. Key enzyme in folate metabolism. Catalyzes an essential reaction for de novo glycine and purine synthesis, and for DNA precursor synthesis. The protein is Dihydrofolate reductase (DHFR) of Aedes albopictus (Asian tiger mosquito).